The primary structure comprises 99 residues: Ribosomal processing cysteine protease Prp (99 aa).

His16 (proton donor) is an active-site residue. Residue Cys28 is the Nucleophile of the active site.

It belongs to the Prp family. Homodimer.

Its function is as follows. An essential cysteine protease that cleaves the N-terminus from ribosomal protein bL27. The sequence is that of Ribosomal processing cysteine protease Prp from Mycoplasma genitalium (strain ATCC 33530 / DSM 19775 / NCTC 10195 / G37) (Mycoplasmoides genitalium).